Reading from the N-terminus, the 65-residue chain is Large ribosomal subunit protein bL35 (65 aa).

The segment at 1-51 (MPKIKTNRGAAKRFRKSASGRVKRGNAFTSHILTHKTRKNKRNLRGTSMVS) is disordered. 2 stretches are compositionally biased toward basic residues: residues 10-24 (AAKRFRKSASGRVKR) and 33-44 (LTHKTRKNKRNL).

This sequence belongs to the bacterial ribosomal protein bL35 family.

The polypeptide is Large ribosomal subunit protein bL35 (Pelobacter propionicus (strain DSM 2379 / NBRC 103807 / OttBd1)).